A 376-amino-acid chain; its full sequence is CYP enzymes assisting alcohol dehydrogenase (376 aa).

Positions 43, 45, 64, 94, 97, 100, 108, and 173 each coordinate Zn(2+). NAD(+) is bound at residue Thr-45. Substrate contacts are provided by Thr-45 and His-64. NAD(+) is bound by residues 199-204, Asp-223, Lys-228, 294-296, Phe-320, and Lys-371; these read GLGAVG and LGA.

This sequence belongs to the zinc-containing alcohol dehydrogenase family. Class-III subfamily. As to quaternary structure, homodimer. The cofactor is Zn(2+).

Its pathway is alkaloid biosynthesis. May be a positive catalyzer of strictosidine production by assisting secologanin biosynthesis, thus being involved in monoterpene indole alkaloids accumulation. The protein is CYP enzymes assisting alcohol dehydrogenase of Catharanthus roseus (Madagascar periwinkle).